The chain runs to 141 residues: MNVYFILFLGVFAFIEVNCKSRKSKSLGTCPKLDVSTVCVVDYKFNCLFQKQCPSGYRCCTYGCNRRCAAVTVNKKHLGSCRNSSGKKGKRCKKDKSCKRHEKCCNKRCRRVRKKIAPVRTLSKNSSNSFSFLMKLISINR.

The first 19 residues, 1–19 (MNVYFILFLGVFAFIEVNC), serve as a signal peptide directing secretion. The WAP domain maps to 23-71 (KSKSLGTCPKLDVSTVCVVDYKFNCLFQKQCPSGYRCCTYGCNRRCAAV). 6 disulfides stabilise this stretch: Cys30-Cys60, Cys39-Cys64, Cys47-Cys59, Cys53-Cys68, Cys81-Cys105, and Cys92-Cys104.

As to expression, component of the organic matrix of calcified shell layers like nacre and prisms.

The protein localises to the secreted. The polypeptide is Perlwapin-like protein (Mytilus galloprovincialis (Mediterranean mussel)).